The primary structure comprises 183 residues: Der GTPase-activating protein YihI (183 aa).

A disordered region spans residues 1-101 (MSRSKKTRKG…KLTDEQKLLK (101 aa)). Composition is skewed to basic and acidic residues over residues 22–46 (KKQD…RHNE) and 92–101 (KLTDEQKLLK).

This sequence belongs to the YihI family. Interacts with Der.

Its function is as follows. A GTPase-activating protein (GAP) that modifies Der/EngA GTPase function. May play a role in ribosome biogenesis. This Shewanella oneidensis (strain ATCC 700550 / JCM 31522 / CIP 106686 / LMG 19005 / NCIMB 14063 / MR-1) protein is Der GTPase-activating protein YihI.